Here is a 330-residue protein sequence, read N- to C-terminus: Glycerol-3-phosphate dehydrogenase [NAD(P)+] (330 aa).

The NADPH site is built by serine 10, tryptophan 11, arginine 31, and lysine 104. Lysine 104, glycine 131, and serine 133 together coordinate sn-glycerol 3-phosphate. Alanine 135 contributes to the NADPH binding site. 5 residues coordinate sn-glycerol 3-phosphate: lysine 186, aspartate 239, serine 249, arginine 250, and asparagine 251. Lysine 186 acts as the Proton acceptor in catalysis. Residue arginine 250 participates in NADPH binding. NADPH-binding residues include valine 274 and glutamate 276.

It belongs to the NAD-dependent glycerol-3-phosphate dehydrogenase family.

Its subcellular location is the cytoplasm. The catalysed reaction is sn-glycerol 3-phosphate + NAD(+) = dihydroxyacetone phosphate + NADH + H(+). It carries out the reaction sn-glycerol 3-phosphate + NADP(+) = dihydroxyacetone phosphate + NADPH + H(+). It participates in membrane lipid metabolism; glycerophospholipid metabolism. Functionally, catalyzes the reduction of the glycolytic intermediate dihydroxyacetone phosphate (DHAP) to sn-glycerol 3-phosphate (G3P), the key precursor for phospholipid synthesis. This Thermoanaerobacter sp. (strain X514) protein is Glycerol-3-phosphate dehydrogenase [NAD(P)+].